Consider the following 97-residue polypeptide: MEFKHVLMILGVIILTLAPLIMYSGLGEDEGYFGGADGAAGDLIMEISPNYEPWFEPFWEPPSGEIESLLFALQAAIGALIIGYFFGYNKAKYDDQN.

The next 2 helical transmembrane spans lie at 6-26 (VLMILGVIILTLAPLIMYSGL) and 68-88 (SLLFALQAAIGALIIGYFFGY).

Belongs to the CbiN family. In terms of assembly, forms an energy-coupling factor (ECF) transporter complex composed of an ATP-binding protein (A component, CbiO), a transmembrane protein (T component, CbiQ) and 2 possible substrate-capture proteins (S components, CbiM and CbiN) of unknown stoichimetry.

The protein localises to the cell membrane. Its pathway is cofactor biosynthesis; adenosylcobalamin biosynthesis. In terms of biological role, part of the energy-coupling factor (ECF) transporter complex CbiMNOQ involved in cobalt import. The polypeptide is Cobalt transport protein CbiN (Methanococcus maripaludis (strain C7 / ATCC BAA-1331)).